Consider the following 238-residue polypeptide: MRFDGRGAESLREVKITRNYLKHAEGSVLIEFGDTKVICTASVEGSVPPFLRGKGTGWVTAEYSMLPRATHTRSHRESSKGKVGGRTHEIQRLIGRSLRAVMDMNLLGERSVLIDCDVIQADGGTRTASITGAYVALYDALDGLVKKGELAAMPLKEAVAAVSVGIVDGTPLLDLNYVEDSSAEVDMNFVMTSSNRFVEVQGTAEAEPFTVEQMDAMRDLAISGIKRLFQIQKEALCQ.

Residues R86 and 124–126 each bind phosphate; that span reads GTR.

This sequence belongs to the RNase PH family. As to quaternary structure, homohexameric ring arranged as a trimer of dimers.

It carries out the reaction tRNA(n+1) + phosphate = tRNA(n) + a ribonucleoside 5'-diphosphate. Phosphorolytic 3'-5' exoribonuclease that plays an important role in tRNA 3'-end maturation. Removes nucleotide residues following the 3'-CCA terminus of tRNAs; can also add nucleotides to the ends of RNA molecules by using nucleoside diphosphates as substrates, but this may not be physiologically important. Probably plays a role in initiation of 16S rRNA degradation (leading to ribosome degradation) during starvation. The protein is Ribonuclease PH of Geotalea uraniireducens (strain Rf4) (Geobacter uraniireducens).